Consider the following 93-residue polypeptide: Pyrimidine/purine nucleoside phosphorylase (93 aa).

This sequence belongs to the nucleoside phosphorylase PpnP family.

The enzyme catalyses a purine D-ribonucleoside + phosphate = a purine nucleobase + alpha-D-ribose 1-phosphate. It catalyses the reaction adenosine + phosphate = alpha-D-ribose 1-phosphate + adenine. The catalysed reaction is cytidine + phosphate = cytosine + alpha-D-ribose 1-phosphate. It carries out the reaction guanosine + phosphate = alpha-D-ribose 1-phosphate + guanine. The enzyme catalyses inosine + phosphate = alpha-D-ribose 1-phosphate + hypoxanthine. It catalyses the reaction thymidine + phosphate = 2-deoxy-alpha-D-ribose 1-phosphate + thymine. The catalysed reaction is uridine + phosphate = alpha-D-ribose 1-phosphate + uracil. It carries out the reaction xanthosine + phosphate = alpha-D-ribose 1-phosphate + xanthine. Functionally, catalyzes the phosphorolysis of diverse nucleosides, yielding D-ribose 1-phosphate and the respective free bases. Can use uridine, adenosine, guanosine, cytidine, thymidine, inosine and xanthosine as substrates. Also catalyzes the reverse reactions. This is Pyrimidine/purine nucleoside phosphorylase from Pseudomonas syringae pv. syringae (strain B728a).